The following is a 341-amino-acid chain: Anthranilate phosphoribosyltransferase (341 aa).

5-phospho-alpha-D-ribose 1-diphosphate contacts are provided by residues G80, 83–84 (GD), T88, 90–93 (NIST), 108–116 (KHGNRAMSS), and S120. G80 contributes to the anthranilate binding site. Residue S92 coordinates Mg(2+). Anthranilate is bound at residue N111. R166 lines the anthranilate pocket. Mg(2+)-binding residues include D225 and E226.

The protein belongs to the anthranilate phosphoribosyltransferase family. Homodimer. Mg(2+) is required as a cofactor.

It carries out the reaction N-(5-phospho-beta-D-ribosyl)anthranilate + diphosphate = 5-phospho-alpha-D-ribose 1-diphosphate + anthranilate. Its pathway is amino-acid biosynthesis; L-tryptophan biosynthesis; L-tryptophan from chorismate: step 2/5. Catalyzes the transfer of the phosphoribosyl group of 5-phosphorylribose-1-pyrophosphate (PRPP) to anthranilate to yield N-(5'-phosphoribosyl)-anthranilate (PRA). This Roseiflexus sp. (strain RS-1) protein is Anthranilate phosphoribosyltransferase.